The chain runs to 215 residues: Imidazole glycerol phosphate synthase subunit HisH (215 aa).

Positions 3 to 215 constitute a Glutamine amidotransferase type-1 domain; it reads TAVVFDYGFG…QLLKNWIATL (213 aa). The active-site Nucleophile is cysteine 81. Residues histidine 196 and glutamate 198 contribute to the active site.

Heterodimer of HisH and HisF.

The protein localises to the cytoplasm. The catalysed reaction is 5-[(5-phospho-1-deoxy-D-ribulos-1-ylimino)methylamino]-1-(5-phospho-beta-D-ribosyl)imidazole-4-carboxamide + L-glutamine = D-erythro-1-(imidazol-4-yl)glycerol 3-phosphate + 5-amino-1-(5-phospho-beta-D-ribosyl)imidazole-4-carboxamide + L-glutamate + H(+). It catalyses the reaction L-glutamine + H2O = L-glutamate + NH4(+). Its pathway is amino-acid biosynthesis; L-histidine biosynthesis; L-histidine from 5-phospho-alpha-D-ribose 1-diphosphate: step 5/9. Functionally, IGPS catalyzes the conversion of PRFAR and glutamine to IGP, AICAR and glutamate. The HisH subunit catalyzes the hydrolysis of glutamine to glutamate and ammonia as part of the synthesis of IGP and AICAR. The resulting ammonia molecule is channeled to the active site of HisF. This is Imidazole glycerol phosphate synthase subunit HisH from Bifidobacterium longum (strain NCC 2705).